The sequence spans 313 residues: L-lactate dehydrogenase 1 (313 aa).

Residues Val15, Asp36, Lys41, Tyr66, and 80-81 (GA) contribute to the NAD(+) site. Residues Gln83 and Arg89 each coordinate substrate. Residues Ser102, 119–121 (VSN), and Ser144 each bind NAD(+). 121 to 124 (NPVD) is a binding site for substrate. 149–152 (DTSR) serves as a coordination point for substrate. Residues Arg154 and His169 each coordinate beta-D-fructose 1,6-bisphosphate. The Proton acceptor role is filled by His176. A Phosphotyrosine modification is found at Tyr222. Thr231 serves as a coordination point for substrate.

Belongs to the LDH/MDH superfamily. LDH family. Homotetramer.

It localises to the cytoplasm. It carries out the reaction (S)-lactate + NAD(+) = pyruvate + NADH + H(+). The protein operates within fermentation; pyruvate fermentation to lactate; (S)-lactate from pyruvate: step 1/1. Its activity is regulated as follows. Allosterically activated by fructose 1,6-bisphosphate (FBP). Catalyzes the conversion of lactate to pyruvate. The sequence is that of L-lactate dehydrogenase 1 from Clostridium acetobutylicum (strain ATCC 824 / DSM 792 / JCM 1419 / IAM 19013 / LMG 5710 / NBRC 13948 / NRRL B-527 / VKM B-1787 / 2291 / W).